We begin with the raw amino-acid sequence, 154 residues long: uncharacterized protein (154 aa).

A run of 2 helical transmembrane segments spans residues 54–74 (FLIT…IYLL) and 81–101 (FAFV…FFLS).

Its subcellular location is the cell membrane. This is an uncharacterized protein from Mycoplasma genitalium (strain ATCC 33530 / DSM 19775 / NCTC 10195 / G37) (Mycoplasmoides genitalium).